Reading from the N-terminus, the 285-residue chain is Energy-coupling factor transporter ATP-binding protein EcfA1 (285 aa).

Positions 9–246 constitute an ABC transporter domain; the sequence is VTVEHLSFTY…VSLIKNAGLD (238 aa). Position 43-50 (43-50) interacts with ATP; sequence GHNGSGKS.

It belongs to the ABC transporter superfamily. Energy-coupling factor EcfA family. As to quaternary structure, forms a stable energy-coupling factor (ECF) transporter complex composed of 2 membrane-embedded substrate-binding proteins (S component), 2 ATP-binding proteins (A component) and 2 transmembrane proteins (T component).

The protein resides in the cell membrane. ATP-binding (A) component of a common energy-coupling factor (ECF) ABC-transporter complex. Unlike classic ABC transporters this ECF transporter provides the energy necessary to transport a number of different substrates. In Lactobacillus gasseri (strain ATCC 33323 / DSM 20243 / BCRC 14619 / CIP 102991 / JCM 1131 / KCTC 3163 / NCIMB 11718 / NCTC 13722 / AM63), this protein is Energy-coupling factor transporter ATP-binding protein EcfA1.